The sequence spans 156 residues: UPF0262 protein Jann_2882 (156 aa).

The protein belongs to the UPF0262 family.

In Jannaschia sp. (strain CCS1), this protein is UPF0262 protein Jann_2882.